Consider the following 485-residue polypeptide: Glutamyl-tRNA(Gln) amidotransferase subunit A (485 aa).

Catalysis depends on charge relay system residues K80 and S155. S179 acts as the Acyl-ester intermediate in catalysis.

It belongs to the amidase family. GatA subfamily. In terms of assembly, heterotrimer of A, B and C subunits.

The enzyme catalyses L-glutamyl-tRNA(Gln) + L-glutamine + ATP + H2O = L-glutaminyl-tRNA(Gln) + L-glutamate + ADP + phosphate + H(+). Allows the formation of correctly charged Gln-tRNA(Gln) through the transamidation of misacylated Glu-tRNA(Gln) in organisms which lack glutaminyl-tRNA synthetase. The reaction takes place in the presence of glutamine and ATP through an activated gamma-phospho-Glu-tRNA(Gln). The sequence is that of Glutamyl-tRNA(Gln) amidotransferase subunit A from Endomicrobium trichonymphae.